The sequence spans 254 residues: Imidazole glycerol phosphate synthase subunit HisF (254 aa).

Residues Asp-12 and Asp-131 contribute to the active site.

It belongs to the HisA/HisF family. In terms of assembly, heterodimer of HisH and HisF.

It localises to the cytoplasm. It catalyses the reaction 5-[(5-phospho-1-deoxy-D-ribulos-1-ylimino)methylamino]-1-(5-phospho-beta-D-ribosyl)imidazole-4-carboxamide + L-glutamine = D-erythro-1-(imidazol-4-yl)glycerol 3-phosphate + 5-amino-1-(5-phospho-beta-D-ribosyl)imidazole-4-carboxamide + L-glutamate + H(+). It functions in the pathway amino-acid biosynthesis; L-histidine biosynthesis; L-histidine from 5-phospho-alpha-D-ribose 1-diphosphate: step 5/9. Functionally, IGPS catalyzes the conversion of PRFAR and glutamine to IGP, AICAR and glutamate. The HisF subunit catalyzes the cyclization activity that produces IGP and AICAR from PRFAR using the ammonia provided by the HisH subunit. This chain is Imidazole glycerol phosphate synthase subunit HisF, found in Janthinobacterium sp. (strain Marseille) (Minibacterium massiliensis).